Reading from the N-terminus, the 442-residue chain is Kelch domain-containing protein 10 (442 aa).

The tract at residues 1–57 is disordered; that stretch reads MSAAQGWDRNRRRGGGAAGAGGGGSGAGGGSGGSGGRGTGQLNRFVQLSGRPHLPGK. Arg13 is modified (omega-N-methylarginine). The span at 15-39 shows a compositional bias: gly residues; the sequence is GGAAGAGGGGSGAGGGSGGSGGRGT. Kelch repeat units follow at residues 87–154, 155–198, 199–260, 261–319, 320–364, and 365–403; these read RPPP…PREL, ASMS…ALLS, CRGK…PEER, YRHE…RRCH, SCVQ…PEPV, and YFHCAAVTPAGCMYIHGGVVNIHENKRTGSLFKIWLVVP. The tract at residues 401-442 is interaction with CUL2; it reads VVPSLLELAWEKLLAAFPNLANLSRTQLLHLGLTQGLIERLK.

The protein belongs to the KLHDC10 family. As to quaternary structure, component of a CRL2 E3 ubiquitin-protein ligase complex, also named ECS (Elongin BC-CUL2/5-SOCS-box protein) complex, composed of CUL2, Elongin BC (ELOB and ELOC), RBX1 and substrate-specific adapter KLHDC10. Interacts (via the 6 Kelch repeats) with PPP5C.

It is found in the nucleus. It localises to the cytoplasm. It participates in protein modification; protein ubiquitination. Substrate-recognition component of a Cul2-RING (CRL2) E3 ubiquitin-protein ligase complex of the DesCEND (destruction via C-end degrons) pathway, which recognizes a C-degron located at the extreme C-terminus of target proteins, leading to their ubiquitination and degradation. The C-degron recognized by the DesCEND pathway is usually a motif of less than ten residues and can be present in full-length proteins, truncated proteins or proteolytically cleaved forms. The CRL2(KLHDC10) complex specifically recognizes proteins with a proline-glycine (Pro-Gly) or an alanine tail (CAT tail) at the C-terminus, leading to their ubiquitination and degradation. The CRL2(KLHDC10) complex is involved in the ribosome-associated quality control (RQC) pathway, which mediates the extraction of incompletely synthesized nascent chains from stalled ribosomes: CRL2(KLHDC10) acts downstream of NEMF and recognizes CAT tails associated with stalled nascent chains, leading to their ubiquitination and degradation. Participates in the oxidative stress-induced cell death through MAP3K5 activation. Inhibits PPP5C phosphatase activity on MAP3K5. Acts as a regulator of necroptosis. The sequence is that of Kelch domain-containing protein 10 from Homo sapiens (Human).